The primary structure comprises 427 residues: Serine--tRNA ligase (427 aa).

231–233 contributes to the L-serine binding site; that stretch reads TAE. 262-264 provides a ligand contact to ATP; that stretch reads RSE. Position 285 (E285) interacts with L-serine. Residue 349 to 352 coordinates ATP; the sequence is EISS. S385 is a binding site for L-serine.

It belongs to the class-II aminoacyl-tRNA synthetase family. Type-1 seryl-tRNA synthetase subfamily. Homodimer. The tRNA molecule binds across the dimer.

The protein resides in the cytoplasm. The enzyme catalyses tRNA(Ser) + L-serine + ATP = L-seryl-tRNA(Ser) + AMP + diphosphate + H(+). The catalysed reaction is tRNA(Sec) + L-serine + ATP = L-seryl-tRNA(Sec) + AMP + diphosphate + H(+). It participates in aminoacyl-tRNA biosynthesis; selenocysteinyl-tRNA(Sec) biosynthesis; L-seryl-tRNA(Sec) from L-serine and tRNA(Sec): step 1/1. Its function is as follows. Catalyzes the attachment of serine to tRNA(Ser). Is also able to aminoacylate tRNA(Sec) with serine, to form the misacylated tRNA L-seryl-tRNA(Sec), which will be further converted into selenocysteinyl-tRNA(Sec). The polypeptide is Serine--tRNA ligase (Brucella abortus (strain S19)).